A 1620-amino-acid polypeptide reads, in one-letter code: Putative zinc carboxypeptidase (1620 aa).

At 1 to 1367 (MLFKNEDSGN…SYDFLYFDEN (1367 aa)) the chain is on the extracellular side. A glycan (N-linked (GlcNAc...) asparagine) is linked at asparagine 19. Residues 32–74 (RNDNKNNDNEDNKQDDEEKNDEDDNKSNLLLEENEENKRQGDK) are disordered. Residues 33–43 (NDNKNNDNEDN) are compositionally biased toward basic and acidic residues. Residues 44–55 (KQDDEEKNDEDD) are compositionally biased toward acidic residues. 2 N-linked (GlcNAc...) asparagine glycosylation sites follow: asparagine 56 and asparagine 102. The disordered stretch occupies residues 309-328 (GNHYDAHESTNTYDEEKTRE). 10 N-linked (GlcNAc...) asparagine glycosylation sites follow: asparagine 354, asparagine 487, asparagine 508, asparagine 529, asparagine 550, asparagine 571, asparagine 589, asparagine 687, asparagine 802, and asparagine 1010. Positions 497–559 (VNNLDSTVNY…NSTGNNINNI (63 aa)) are possible malaria epitope. The Peptidase M14 domain maps to 1004-1261 (GENKKNNGTK…FYVQNYFEGY (258 aa)). Positions 1059 and 1062 each coordinate Zn(2+). N-linked (GlcNAc...) asparagine glycosylation is found at asparagine 1064 and asparagine 1141. Histidine 1155 contributes to the Zn(2+) binding site. Glutamate 1229 functions as the Proton donor/acceptor in the catalytic mechanism. Positions 1279 to 1329 (NIKGDDNINGDDNIKGGDNIKGDDNIKRDDNFQRDDNFQRDDNFQRGDNFH) are disordered. The chain crosses the membrane as a helical span at residues 1368-1388 (LLFMTGVSFGICLFKFINFLS). Residues 1389 to 1620 (YHKSSICRRT…SKRKKVIVIL (232 aa)) lie on the Cytoplasmic side of the membrane. The segment at 1560 to 1620 (PNGKYKGPGF…SKRKKVIVIL (61 aa)) is disordered. Basic and acidic residues predominate over residues 1581–1597 (NKNESKTEKKSKTENKS). The span at 1598-1620 (KSKSKNKSKSKNKSKRKKVIVIL) shows a compositional bias: basic residues.

It belongs to the peptidase M14 family. Zn(2+) is required as a cofactor.

The protein localises to the membrane. The polypeptide is Putative zinc carboxypeptidase (Plasmodium falciparum (isolate 3D7)).